The sequence spans 273 residues: Rhamnulose-1-phosphate aldolase (273 aa).

E117 is a catalytic residue. Zn(2+)-binding residues include H140, H142, and H211.

This sequence belongs to the aldolase class II family. RhaD subfamily. Requires Zn(2+) as cofactor.

It localises to the cytoplasm. It catalyses the reaction L-rhamnulose 1-phosphate = (S)-lactaldehyde + dihydroxyacetone phosphate. The protein operates within carbohydrate degradation; L-rhamnose degradation; glycerone phosphate from L-rhamnose: step 3/3. Catalyzes the reversible cleavage of L-rhamnulose-1-phosphate to dihydroxyacetone phosphate (DHAP) and L-lactaldehyde. This chain is Rhamnulose-1-phosphate aldolase, found in Listeria innocua serovar 6a (strain ATCC BAA-680 / CLIP 11262).